The primary structure comprises 271 residues: Ubiquitin thioesterase OTUB1 (271 aa).

Ala-2 carries the post-translational modification N-acetylalanine. Ser-16 is modified (phosphoserine). The residue at position 26 (Tyr-26) is a Phosphotyrosine. An OTU domain is found at 80-271 (SYIRKTRPDG…RPGHYDILYK (192 aa)). Asp-88 is an active-site residue. Catalysis depends on Cys-91, which acts as the Nucleophile. Ubiquitin-conjugating enzyme E2 binding stretches follow at residues 130 to 138 (FTEFTIEDF) and 169 to 177 (DYLVVYLRL). The segment at 189-195 (FFEHFIE) is free ubiquitin binding. The tract at residues 206–213 (QEVEPMCK) is ubiquitin-conjugating enzyme E2 binding. 2 free ubiquitin binding regions span residues 214–221 (ESDHIHII) and 245–251 (NPHVFPE). His-265 is a catalytic residue.

Belongs to the peptidase C65 family. Interacts with RNF128. Forms a ternary complex with RNF128 and USP8. Interacts with FUS and RACK1. Interacts with UBE2D1/UBCH5A, UBE2W/UBC16 and UBE2N/UBC13. In terms of processing, phosphorylation at Tyr-26 by SRC and SRMS promotes deubiquitination of RPTOR via a non-catalytic process.

The protein resides in the cytoplasm. The catalysed reaction is Thiol-dependent hydrolysis of ester, thioester, amide, peptide and isopeptide bonds formed by the C-terminal Gly of ubiquitin (a 76-residue protein attached to proteins as an intracellular targeting signal).. With respect to regulation, by free ubiquitin: binding of free ubiquitin triggers conformational changes in the OTU domain and formation of a ubiquitin-binding helix in the N-terminus, promoting binding of the conjugated donor ubiquitin in UBE2N/UBC13 to OTUB1. Its function is as follows. Hydrolase that can specifically remove compared to 'Lys-48'-linked conjugated ubiquitin from proteins and plays an important regulatory role at the level of protein turnover by preventing degradation. Regulator of T-cell anergy, a phenomenon that occurs when T-cells are rendered unresponsive to antigen rechallenge and no longer respond to their cognate antigen. Acts via its interaction with RNF128/GRAIL. Surprisingly, it regulates RNF128-mediated ubiquitination, but does not deubiquitinate polyubiquitinated RNF128. Deubiquitinates estrogen receptor alpha (ESR1). Mediates deubiquitination of 'Lys-48'-linked polyubiquitin chains, but not 'Lys-63'-linked polyubiquitin chains. Not able to cleave di-ubiquitin. Also capable of removing NEDD8 from NEDD8 conjugates, but with a much lower preference compared to 'Lys-48'-linked ubiquitin. In terms of biological role, plays a key non-catalytic role in DNA repair regulation by inhibiting activity of RNF168, an E3 ubiquitin-protein ligase that promotes accumulation of 'Lys-63'-linked histone H2A and H2AX at DNA damage sites. Inhibits RNF168 independently of ubiquitin thioesterase activity by binding and inhibiting UBE2N/UBC13, the E2 partner of RNF168, thereby limiting spreading of 'Lys-63'-linked histone H2A and H2AX marks. Inhibition occurs by binding to free ubiquitin: free ubiquitin acts as an allosteric regulator that increases affinity for UBE2N/UBC13 and disrupts interaction with UBE2V1. The OTUB1-UBE2N/UBC13-free ubiquitin complex adopts a configuration that mimics a cleaved 'Lys48'-linked di-ubiquitin chain. Acts as a regulator of mTORC1 and mTORC2 complexes. When phosphorylated at Tyr-26, acts as an activator of the mTORC1 complex by mediating deubiquitination of RPTOR via a non-catalytic process: acts by binding and inhibiting the activity of the ubiquitin-conjugating enzyme E2 (UBE2D1/UBCH5A, UBE2W/UBC16 and UBE2N/UBC13), thereby preventing ubiquitination of RPTOR. Can also act as an inhibitor of the mTORC1 and mTORC2 complexes in response to amino acids by mediating non-catalytic deubiquitination of DEPTOR. The protein is Ubiquitin thioesterase OTUB1 (Otub1) of Mus musculus (Mouse).